Here is a 261-residue protein sequence, read N- to C-terminus: uncharacterized protein (261 aa).

Residues 1–12 (MSRTSSQNQEII) show a composition bias toward polar residues. The segment at 1 to 139 (MSRTSSQNQE…KELDTINKKT (139 aa)) is disordered. Over residues 23 to 55 (SSKPSKSSKPSKSSKPSKSSKTSKSSRSSGSKS) the composition is skewed to low complexity. Residues 65 to 74 (SRKDKYKEEY) show a composition bias toward basic and acidic residues. The span at 79 to 108 (YPDEQEYEQEYEQEYEQEYQDNGEQTEEFV) shows a compositional bias: acidic residues. The segment covering 122–139 (DERQTQSNKELDTINKKT) has biased composition (basic and acidic residues). Coiled-coil stretches lie at residues 151–181 (MDHD…IIKL) and 218–243 (EDII…KKIE).

This is an uncharacterized protein from Acanthamoeba polyphaga (Amoeba).